A 499-amino-acid chain; its full sequence is Cytochrome P450 2M1 (499 aa).

C441 lines the heme pocket.

This sequence belongs to the cytochrome P450 family. Requires heme as cofactor. In kidney and in liver from juvenile and sexually mature trout from both sexes.

The protein localises to the endoplasmic reticulum membrane. It is found in the microsome membrane. The enzyme catalyses an organic molecule + reduced [NADPH--hemoprotein reductase] + O2 = an alcohol + oxidized [NADPH--hemoprotein reductase] + H2O + H(+). Its function is as follows. Has (omega-6)-hydroxylation activity toward lauric acid. This chain is Cytochrome P450 2M1 (cyp2m1), found in Oncorhynchus mykiss (Rainbow trout).